The following is a 175-amino-acid chain: Large ribosomal subunit protein uL18 (175 aa).

This sequence belongs to the universal ribosomal protein uL18 family. Part of the 50S ribosomal subunit. Contacts the 5S and 23S rRNAs.

Its function is as follows. This is one of the proteins that bind and probably mediate the attachment of the 5S RNA into the large ribosomal subunit, where it forms part of the central protuberance. The sequence is that of Large ribosomal subunit protein uL18 from Methanoculleus marisnigri (strain ATCC 35101 / DSM 1498 / JR1).